Here is a 433-residue protein sequence, read N- to C-terminus: Type I acyl-CoA thioesterase mpaH (433 aa).

Positions 58-246 are abhydrolase domain; sequence HGVGLPKELY…IKARFGTTAD (189 aa). V60 is a substrate binding site. Residue S139 is the Nucleophile of the active site. F140 is a binding site for substrate. Residues D163 and H365 contribute to the active site.

The protein belongs to the AB hydrolase superfamily. MpaH hydrolase family. Homodimer.

Its subcellular location is the peroxisome matrix. It catalyses the reaction mycophenolyl-CoA + H2O = mycophenolate + CoA + H(+). Its pathway is secondary metabolite biosynthesis; terpenoid biosynthesis. In terms of biological role, type I acyl-CoA thioesterase; part of the gene cluster that mediates the biosynthesis of mycophenolic acid (MPA), the first isolated antibiotic natural product in the world obtained from a culture of Penicillium brevicompactum in 1893. MpaH acts as a peroxisomal acyl-CoA hydrolase that converts MPA-CoA into the final product MPA. The first step of the pathway is the synthesis of 5-methylorsellinic acid (5MOA) by the cytosolic polyketide synthase mpaC. 5MOA is then converted to the phthalide compound 5,7-dihydroxy-4,6-dimethylphthalide (DHMP) by the endoplasmic reticulum-bound cytochrome P450 monooxygenase mpaDE. MpaDE first catalyzes hydroxylation of 5-MOA to 4,6-dihydroxy-2-(hydroxymethyl)-3-methylbenzoic acid (DHMB). MpaDE then acts as a lactone synthase that catalyzes the ring closure to convert DHMB into DHMP. The next step is the prenylation of DHMP by the Golgi apparatus-associated prenyltransferase mpaA to yield farnesyl-DHMP (FDHMP). The ER-bound oxygenase mpaB then mediates the oxidative cleavage the C19-C20 double bond in FDHMP to yield FDHMP-3C via a mycophenolic aldehyde intermediate. The O-methyltransferase mpaG catalyzes the methylation of FDHMP-3C to yield MFDHMP-3C. After the cytosolic methylation of FDHMP-3C, MFDHMP-3C enters into peroxisomes probably via free diffusion due to its low molecular weight. Upon a peroxisomal CoA ligation reaction, catalyzed by a beta-oxidation component enzyme acyl-CoA ligase ACL891, MFDHMP-3C-CoA would then be restricted to peroxisomes for the following beta-oxidation pathway steps. The peroxisomal beta-oxidation machinery than converts MFDHMP-3C-CoA into MPA_CoA, via a beta-oxidation chain-shortening process. Finally mpaH acts as a peroxisomal acyl-CoA hydrolase with high substrate specificity toward MPA-CoA to release the final product MPA. This chain is Type I acyl-CoA thioesterase mpaH, found in Penicillium brevicompactum.